Reading from the N-terminus, the 249-residue chain is 23S rRNA (guanosine-2'-O-)-methyltransferase RlmB (249 aa).

S-adenosyl-L-methionine-binding residues include Gly200, Ile220, and Leu229.

This sequence belongs to the class IV-like SAM-binding methyltransferase superfamily. RNA methyltransferase TrmH family. RlmB subfamily.

Its subcellular location is the cytoplasm. It carries out the reaction guanosine(2251) in 23S rRNA + S-adenosyl-L-methionine = 2'-O-methylguanosine(2251) in 23S rRNA + S-adenosyl-L-homocysteine + H(+). Functionally, specifically methylates the ribose of guanosine 2251 in 23S rRNA. The polypeptide is 23S rRNA (guanosine-2'-O-)-methyltransferase RlmB (Xylella fastidiosa (strain 9a5c)).